Here is a 1354-residue protein sequence, read N- to C-terminus: MSTGDSFETRFEKIDNLLRDPKSEVNSDCLLDGLDALVYDLDFPALRKNKNIDNFLSRYKDTINKIRDLRMKAEDYEVVKVIGRGAFGEVQLVRHKSTRKVYAMKLLSKFEMIKRSDSAFFWEERDIMAFANSPWVVQLFYAFQDDRYLYMVMEYMPGGDLVNLMSNYDVPEKWARFYTAEVVLALDAIHSMGFIHRDVKPDNMLLDKSGHLKLADFGTCMKMNKEGMVRCDTAVGTPDYISPEVLKSQGGDGYYGRECDWWSVGVFLYEMLVGDTPFYADSLVGTYSKIMNHKNSLTFPDDNDISKEAKNLICAFLTDREVRLGRNGVEEIKRHLFFKNDQWAWETLRDTVAPVVPDLSSDIDTSNFDDLEEDKGDEETFPIPKAFVGNQLPFVGFTYYSNRRYLPSANASENRSSSNVDKSLQESLQKTIYKLEEQLHNEMQLKDEMEQKCRTSNLKLDKIMKELDEEGNQRRNLESAVSQIEKEKMLLQHRINEYQRKVEQENEKRRNIENEVSTLKDQLEDLRKASQTSQLANEKLTQLQKQLEEANDLLRTESDTAVRLRKSHTEMSKSISQLESLNRELQERNRILENSKSQADKDYYQLQAVLEAERRDRGHDSEMIGDLQARITSLQEEVKHLKHNLERVEGERKEAQDMLNHSEKEKNNLEIDLNYKLKSIQQRLEQEVNEHKVTKARLTDKHQSIEEAKSVAMCEMEKKLKEEREAREKAENRVVETEKQCSMLDVDLKQSQQKLEHLTENKERMEDEVKNLALQLEQESNKRLLLQNELKTQAFEADNLKGLEKQMKQEINTLLEAKRLLEFELAQLTKQYRGNEGQMRELQDQLEAEQYFSTLYKTQVKELKEEIEEKNRENLRKIQELQSEKETLSTQLDLAETKAESEQLARGILEEQYFELTQESKKAASRNRQEITDKDHTVSRLEETNSVLTKDIEMLRKENEELNERMRTAEEEYKLKKEEEINNLKAAFEKNISTERTLKTQAVNKLAEIMNRKDFKIDRKKANTQDLRKKEKENRKLQLELNQEREKFNQMVVKHQKELNDMQAQLVEECTHRNELQMQLASKESDIEQLRAKLLDLSDSTSVASFPSADETDGNLPESRIEGWLSVPNRGNIKRYGWKKQYVVVSSKKILFYNDEQDKEQSSPSMVLDIDKLFHVRPVTQGDVYRAETEEIPKIFQILYANEGECRKDIEVEPVQQGEKTNFQNHKGHEFIPTLYHFPANCEACAKPLWHVFKPPPALECRRCHVKCHRDHLDKKEDLISPCKVSYDVTSARDMLLLACSQDEQKKWVTHLVKKIPKNPPSGFVRASPRTLSTRSTANQSFRKVVKNTSGKTS.

N-acetylserine is present on Ser-2. The region spanning 76–338 is the Protein kinase domain; sequence YEVVKVIGRG…VEEIKRHLFF (263 aa). ATP is bound by residues 82–90 and Lys-105; that span reads IGRGAFGEV. Asp-198 (proton acceptor) is an active-site residue. The AGC-kinase C-terminal domain maps to 341–409; it reads DQWAWETLRD…YSNRRYLPSA (69 aa). The tract at residues 368–727 is interaction with FHOD1; sequence FDDLEEDKGD…KKLKEEREAR (360 aa). A coiled-coil region spans residues 422 to 692; it reads KSLQESLQKT…RLEQEVNEHK (271 aa). The region spanning 479–556 is the REM-1 domain; the sequence is SAVSQIEKEK…LEEANDLLRT (78 aa). The SHROOM3 binding stretch occupies residues 707 to 946; that stretch reads EAKSVAMCEM…TVSRLEETNS (240 aa). Positions 949 to 1015 constitute a RhoBD domain; sequence TKDIEMLRKE…LAEIMNRKDF (67 aa). Positions 998-1010 are RHOA binding; the sequence is LKTQAVNKLAEIM. Residues 1011 to 1102 adopt a coiled-coil conformation; that stretch reads NRKDFKIDRK…KLLDLSDSTS (92 aa). Phosphoserine occurs at positions 1105 and 1108. An auto-inhibitory region spans residues 1115–1354; that stretch reads NLPESRIEGW…VVKNTSGKTS (240 aa). In terms of domain architecture, PH spans 1118–1317; that stretch reads ESRIEGWLSV…WVTHLVKKIP (200 aa). The Phorbol-ester/DAG-type zinc-finger motif lies at 1228-1283; sequence GHEFIPTLYHFPANCEACAKPLWHVFKPPPALECRRCHVKCHRDHLDKKEDLISPC. Ser-1328 carries the post-translational modification Phosphoserine. The disordered stretch occupies residues 1333–1354; it reads STRSTANQSFRKVVKNTSGKTS.

This sequence belongs to the protein kinase superfamily. AGC Ser/Thr protein kinase family. In terms of assembly, homodimer. Interacts with RHOA (activated by GTP), RHOB, RHOC, GEM, MYLC2B, RHOE, PPP1R12A, LIMK1, LIMK2, TSG101, CHORDC1, DAPK3, PFN1 and JIP3. Interacts with FHOD1 in a Src-dependent manner. Interacts with PTEN. Interacts with ITGB1BP1 (via N-terminus and PTB domain). Interacts with SHROOM3. Requires Mg(2+) as cofactor. Autophosphorylated on serine and threonine residues. In terms of processing, cleaved by caspase-3 during apoptosis. This leads to constitutive activation of the kinase and membrane blebbing. Highly expressed in brain, heart, lung, liver, stomach, spleen, kidney, testis, muscle, embryo and placenta.

It is found in the cytoplasm. The protein resides in the cytoskeleton. The protein localises to the microtubule organizing center. It localises to the centrosome. Its subcellular location is the centriole. It is found in the golgi apparatus membrane. The protein resides in the cell projection. The protein localises to the bleb. It localises to the cell membrane. Its subcellular location is the lamellipodium. It is found in the ruffle. It carries out the reaction L-seryl-[protein] + ATP = O-phospho-L-seryl-[protein] + ADP + H(+). The catalysed reaction is L-threonyl-[protein] + ATP = O-phospho-L-threonyl-[protein] + ADP + H(+). Activated by RHOA binding. Inhibited by Y-27632. Its function is as follows. Protein kinase which is a key regulator of the actin cytoskeleton and cell polarity. Involved in regulation of smooth muscle contraction, actin cytoskeleton organization, stress fiber and focal adhesion formation, neurite retraction, cell adhesion and motility via phosphorylation of DAPK3, GFAP, LIMK1, LIMK2, MYL9/MLC2, TPPP, PFN1 and PPP1R12A. Phosphorylates FHOD1 and acts synergistically with it to promote SRC-dependent non-apoptotic plasma membrane blebbing. Phosphorylates JIP3 and regulates the recruitment of JNK to JIP3 upon UVB-induced stress. Acts as a suppressor of inflammatory cell migration by regulating PTEN phosphorylation and stability. Acts as a negative regulator of VEGF-induced angiogenic endothelial cell activation. Required for centrosome positioning and centrosome-dependent exit from mitosis. Plays a role in terminal erythroid differentiation. Inhibits podocyte motility via regulation of actin cytoskeletal dynamics and phosphorylation of CFL1. Promotes keratinocyte terminal differentiation. Involved in osteoblast compaction through the fibronectin fibrillogenesis cell-mediated matrix assembly process, essential for osteoblast mineralization. May regulate closure of the eyelids and ventral body wall by inducing the assembly of actomyosin bundles. The sequence is that of Rho-associated protein kinase 1 (Rock1) from Mus musculus (Mouse).